A 533-amino-acid chain; its full sequence is Leucine-rich glioma-inactivated protein 1 (533 aa).

Residues 1–34 form the signal peptide; the sequence is MESERSQRMGNACIPLKRIAYCLCLLSALLLTEG. The LRRNT domain occupies 35–72; the sequence is KKPAKPKCPAVCTCTKDNALCENARSIPRTVPPDVISL. LRR repeat units follow at residues 92-113 and 116-137; these read HLEY…TFRG and SLIH…IFKG. One can recognise an LRRCT domain in the interval 149–199; the sequence is NSFNCDCKLKWLVEWLSHTNATVEDIYCEGPPEYKKRKINSLSSKDFDCII. N168 carries N-linked (GlcNAc...) asparagine glycosylation. EAR repeat units lie at residues 201-243, 247-289, 293-340, 342-391, 395-438, 440-482, and 486-528; these read EFAK…EWDH, TFRN…KRDS, KFIK…KWNG, GFYS…QWNK, LFTN…KWGG, SFQD…NWDA, and KFVK…KHVI. An N-linked (GlcNAc...) asparagine glycan is attached at N253. The N-linked (GlcNAc...) asparagine glycan is linked to N398.

As to quaternary structure, oligomer. Interacts with KCNA1 within a complex containing KCNA1, KCNA4 and KCNAB1. Part of a complex containing ADAM22, DLG4/PSD95 and CACNG2 (stargazin). Can bind to ADAM11 and ADAM23. Glycosylated.

It is found in the secreted. It localises to the synapse. Its subcellular location is the cytoplasm. Functionally, regulates voltage-gated potassium channels assembled from KCNA1, KCNA4 and KCNAB1. It slows down channel inactivation by precluding channel closure mediated by the KCNAB1 subunit. Ligand for ADAM22 that positively regulates synaptic transmission mediated by AMPA-type glutamate receptors. Plays a role in suppressing the production of MMP1/3 through the phosphatidylinositol 3-kinase/ERK pathway. In Bos taurus (Bovine), this protein is Leucine-rich glioma-inactivated protein 1 (LGI1).